The primary structure comprises 890 residues: Chloroquine resistance transporter (890 aa).

2 disordered regions span residues 1–163 (MPPA…EAPL) and 280–300 (GMQRPCFGSPSTDTRMGAAEG). Residues 1–349 (MPPAHHGSGG…RATRWIDRNA (349 aa)) lie on the Cytoplasmic side of the membrane. The segment covering 8-19 (SGGRRRPGRGNK) has biased composition (basic residues). Composition is skewed to low complexity over residues 102–126 (APSQSDLPPSLSPTTASRPATSSRS) and 134–156 (SPVASSSAFSSPAPSASALTSAS). A helical membrane pass occupies residues 350 to 372 (ATVRVACYTFLLLVTSTGNTICF). Topologically, residues 373-391 (KKMIDKMPNYSPCLTQVTT) are vacuolar. The chain crosses the membrane as a helical span at residues 392–412 (VVFVPVFFALSLYTDYAGGLP). At 413–422 (QEMADFPKRN) the chain is on the cytoplasmic side. The chain crosses the membrane as a helical span at residues 423-443 (FAVMGFLDSFSGVMAIIGAVH). Residues 444 to 447 (TTGT) lie on the Vacuolar side of the membrane. Residues 448–468 (TQVVLQQSCIVFSLLASIVML) form a helical membrane-spanning segment. Residues 469–471 (RKR) are Cytoplasmic-facing. Residues 472–492 (FHAAHYLGALVIILGVLVVKL) traverse the membrane as a helical segment. Residues 493-505 (PDLLHPSSDGGGD) lie on the Vacuolar side of the membrane. The chain crosses the membrane as a helical span at residues 506–526 (VFVFNLLYLLSNLPTAVSCVY). The Cytoplasmic portion of the chain corresponds to 527 to 544 (KEVAFRGVEMGTNYLQAW). A helical membrane pass occupies residues 545 to 565 (VALFQFLIGFLVLPLNALPVL). Over 566–614 (GPQRVPLAELPASLWNGTRCLFGFNTIVTNCGGAGNMESPCDNCEGAWK) the chain is Vacuolar. Asn-581 carries an N-linked (GlcNAc...) asparagine glycan. 2 disulfides stabilise this stretch: Cys-585/Cys-609 and Cys-596/Cys-606. A helical transmembrane segment spans residues 615-634 (YVGMYLSFNLLYNMFIIFVV). The Cytoplasmic portion of the chain corresponds to 635-640 (KSGGAA). A helical transmembrane segment spans residues 641–663 (LTFLVSTLRLPVTALAFCSRAIM). The Vacuolar segment spans residues 664–673 (GDRAVPPKAT). The chain crosses the membrane as a helical span at residues 674-694 (DFYGLLVLILGLVIYRAGGIM). Residues 695-890 (KRRAQRRAVA…GKSRANNGCI (196 aa)) are Cytoplasmic-facing. Residues 798–871 (AAFTPFTQRM…NRVGGYEPPS (74 aa)) form a disordered region.

Belongs to the CRT-like transporter family.

The protein resides in the vacuole membrane. Nutrient transporter. Involved in maintaining the osmotic homeostasis of the digestive vacuole. Required for the proper organization of the endolysosomal system and, in turn, indirectly for microneme secretion and parasite invasion. Required for bradyzoite viability and cyst development. The polypeptide is Chloroquine resistance transporter (Toxoplasma gondii).